The chain runs to 463 residues: Kynurenine 3-monooxygenase (463 aa).

It belongs to the aromatic-ring hydroxylase family. KMO subfamily. Requires FAD as cofactor.

It is found in the mitochondrion outer membrane. It catalyses the reaction L-kynurenine + NADPH + O2 + H(+) = 3-hydroxy-L-kynurenine + NADP(+) + H2O. It participates in cofactor biosynthesis; NAD(+) biosynthesis; quinolinate from L-kynurenine: step 1/3. Its function is as follows. Catalyzes the hydroxylation of L-kynurenine (L-Kyn) to form 3-hydroxy-L-kynurenine (L-3OHKyn). Required for synthesis of quinolinic acid. The protein is Kynurenine 3-monooxygenase of Yarrowia lipolytica (strain CLIB 122 / E 150) (Yeast).